A 149-amino-acid chain; its full sequence is D-aminoacyl-tRNA deacylase (149 aa).

Positions 137–138 (GP) match the Gly-cisPro motif, important for rejection of L-amino acids motif.

Belongs to the DTD family. Homodimer.

The protein localises to the cytoplasm. It carries out the reaction glycyl-tRNA(Ala) + H2O = tRNA(Ala) + glycine + H(+). The catalysed reaction is a D-aminoacyl-tRNA + H2O = a tRNA + a D-alpha-amino acid + H(+). An aminoacyl-tRNA editing enzyme that deacylates mischarged D-aminoacyl-tRNAs. Also deacylates mischarged glycyl-tRNA(Ala), protecting cells against glycine mischarging by AlaRS. Acts via tRNA-based rather than protein-based catalysis; rejects L-amino acids rather than detecting D-amino acids in the active site. By recycling D-aminoacyl-tRNA to D-amino acids and free tRNA molecules, this enzyme counteracts the toxicity associated with the formation of D-aminoacyl-tRNA entities in vivo and helps enforce protein L-homochirality. The polypeptide is D-aminoacyl-tRNA deacylase (Caldicellulosiruptor saccharolyticus (strain ATCC 43494 / DSM 8903 / Tp8T 6331)).